The primary structure comprises 833 residues: Leucine--tRNA ligase (833 aa).

The 'HIGH' region signature appears at 41-52 (PYPSGVGLHVGH). The 'KMSKS' region motif lies at 610–614 (KMSKS). An ATP-binding site is contributed by Lys613.

This sequence belongs to the class-I aminoacyl-tRNA synthetase family.

Its subcellular location is the cytoplasm. The enzyme catalyses tRNA(Leu) + L-leucine + ATP = L-leucyl-tRNA(Leu) + AMP + diphosphate. The sequence is that of Leucine--tRNA ligase from Streptococcus pneumoniae serotype 2 (strain D39 / NCTC 7466).